A 1016-amino-acid chain; its full sequence is Protein kinase C-like 2 (1016 aa).

One can recognise an REM-1 1 domain in the interval 1-68; sequence MDMIDEAITE…LEKLKLRKNG (68 aa). The disordered stretch occupies residues 68-101; sequence GVRKSNSEKPSVGIEKNPSFSTTKSAKSFSSTSS. The segment covering 86–101 has biased composition (low complexity); it reads SFSTTKSAKSFSSTSS. Residues 111 to 188 enclose the REM-1 2 domain; the sequence is NYDTPLTISK…LKRYHDLHIE (78 aa). A C2 domain is found at 195–307; the sequence is PSTESRGNLN…VEKQRRKKVE (113 aa). 2 consecutive Phorbol-ester/DAG-type zinc fingers follow at residues 405–453 and 473–523; these read GHKF…VTKC and PHHF…PDFC. The segment at 543–602 is disordered; that stretch reads YKAQQHKQKSSHHKHHHHKKSKSSSSKHKENDKASVSITTTTTPSITPADPVPTSPKPLA. Residues 546–568 show a composition bias toward basic residues; the sequence is QQHKQKSSHHKHHHHKKSKSSSS. The span at 579 to 590 shows a compositional bias: low complexity; sequence SITTTTTPSITP. The region spanning 683-942 is the Protein kinase domain; sequence FTFLSVLGKG…AEDVMTHPFF (260 aa). ATP contacts are provided by residues 689–697 and lysine 712; that span reads LGKGNFGKV. Aspartate 808 serves as the catalytic Proton acceptor. In terms of domain architecture, AGC-kinase C-terminal spans 943-1013; that stretch reads SNINWDDIYH…SCEDDKPSTT (71 aa). The residue at position 984 (threonine 984) is a Phosphothreonine.

This sequence belongs to the protein kinase superfamily. AGC Ser/Thr protein kinase family. PKC subfamily. As to quaternary structure, interacts with rho2.

The enzyme catalyses L-seryl-[protein] + ATP = O-phospho-L-seryl-[protein] + ADP + H(+). It carries out the reaction L-threonyl-[protein] + ATP = O-phospho-L-threonyl-[protein] + ADP + H(+). Its function is as follows. Involved in the control of the cell shape. Target of the inhibitor staurosporine. This is Protein kinase C-like 2 (pck2) from Schizosaccharomyces pombe (strain 972 / ATCC 24843) (Fission yeast).